Here is a 653-residue protein sequence, read N- to C-terminus: Hepatocyte growth factor activator serine protease (653 aa).

A signal peptide spans 1–34 (MGRQAWISSLCPLPRPCPFLLLLLLLVVPRGAQP). Residues 34–98 (PQAGRNHTEP…SSSPPGGQVL (65 aa)) form a disordered region. A propeptide spans 35-369 (QAGRNHTEPP…RLTACESLAR (335 aa)) (removed in mature form). Asparagine 39, asparagine 47, and asparagine 63 each carry an N-linked (GlcNAc...) asparagine glycan. Residues 47–59 (NVTATPVTPTIPV) show a composition bias toward low complexity. The 48-residue stretch at 100–147 (ESGQPCRFPFRYGGRMLHSCTSEGSAYRKWCATTHNYDRDRAWGYCAE) folds into the Fibronectin type-II domain. Intrachain disulfides connect cysteine 105/cysteine 130, cysteine 119/cysteine 145, cysteine 161/cysteine 172, cysteine 166/cysteine 183, cysteine 185/cysteine 194, cysteine 199/cysteine 227, cysteine 225/cysteine 234, cysteine 242/cysteine 253, cysteine 247/cysteine 264, cysteine 266/cysteine 275, cysteine 283/cysteine 364, cysteine 304/cysteine 346, cysteine 335/cysteine 359, cysteine 392/cysteine 519, cysteine 430/cysteine 446, cysteine 438/cysteine 508, cysteine 533/cysteine 602, cysteine 565/cysteine 581, and cysteine 592/cysteine 620. The EGF-like 1 domain maps to 157-195 (ILDPCASGPCLNGGTCSSTHDHGSYHCSCPLAFTGKDCG). Residues 197–237 (EKCFDETRYEYFEVGDHWARVSEGHVEQCGCMEGQARCEDT) enclose the Fibronectin type-I domain. Residues 238–276 (HHTACLSSPCLNGGTCHLIVGTGTSVCTCPLGYAGRFCN) form the EGF-like 2 domain. A Kringle domain is found at 283 to 364 (CFLGNGTEYR…SWEYCRLTAC (82 aa)). An N-linked (GlcNAc...) asparagine glycan is attached at asparagine 287. Residues 406–644 (IIGGSSSLPG…YVDWINDRIR (239 aa)) form the Peptidase S1 domain. Histidine 445 functions as the Charge relay system in the catalytic mechanism. Residue asparagine 466 is glycosylated (N-linked (GlcNAc...) asparagine). The active-site Charge relay system is aspartate 495. The N-linked (GlcNAc...) asparagine glycan is linked to asparagine 544. Serine 596 acts as the Charge relay system in catalysis.

This sequence belongs to the peptidase S1 family. Heterodimer of a short chain and a long chain linked by a disulfide bond. Post-translationally, the active form of HGFAC presents in the serum is derived from the COOH-terminal region of the precursor by the cleavage of bonds between Arg-369 and Val-370 and Arg-405 and Ile-406.

It is found in the secreted. Functionally, serine protease that hydrolyzes the inactive zymogen hepatocyte growth factor (HGFsc) to an activated disulfide-linked heterodimer, then initiating hepatocyte growth factor receptor signaling pathway. The sequence is that of Hepatocyte growth factor activator serine protease from Mus musculus (Mouse).